The chain runs to 236 residues: MLPTLIRRLSRALLWFAASSIVLVLVFRWVPPPGTALMVERKVQSWVNGEPIDLQRDWEPWENISDELKVAVIAGEDQKFASHWGFDIPAIQAALAYNERGGNVRGASTLTQQVAKNLFLWSGRSWFRKGLEAWFTALIELFWSKERILEVYLNSAEWGKGVFGAQAAARYHFGVDASRLSRQQAAQLAAVLPSPIKWSASRPSAYVASRAGWIRRQMSQLGGPSYLMQLDTSRKL.

Residues 12–31 traverse the membrane as a helical segment; sequence ALLWFAASSIVLVLVFRWVP.

Belongs to the glycosyltransferase 51 family.

The protein resides in the cell inner membrane. It catalyses the reaction [GlcNAc-(1-&gt;4)-Mur2Ac(oyl-L-Ala-gamma-D-Glu-L-Lys-D-Ala-D-Ala)](n)-di-trans,octa-cis-undecaprenyl diphosphate + beta-D-GlcNAc-(1-&gt;4)-Mur2Ac(oyl-L-Ala-gamma-D-Glu-L-Lys-D-Ala-D-Ala)-di-trans,octa-cis-undecaprenyl diphosphate = [GlcNAc-(1-&gt;4)-Mur2Ac(oyl-L-Ala-gamma-D-Glu-L-Lys-D-Ala-D-Ala)](n+1)-di-trans,octa-cis-undecaprenyl diphosphate + di-trans,octa-cis-undecaprenyl diphosphate + H(+). It functions in the pathway cell wall biogenesis; peptidoglycan biosynthesis. Functionally, peptidoglycan polymerase that catalyzes glycan chain elongation from lipid-linked precursors. The chain is Biosynthetic peptidoglycan transglycosylase from Pseudomonas putida (strain GB-1).